The following is a 434-amino-acid chain: 3-phosphoshikimate 1-carboxyvinyltransferase (434 aa).

3-phosphoshikimate contacts are provided by lysine 15, serine 16, and arginine 20. Lysine 15 is a phosphoenolpyruvate binding site. 2 residues coordinate phosphoenolpyruvate: glycine 96 and arginine 124. Serine 169, glutamine 171, serine 195, aspartate 319, and lysine 346 together coordinate 3-phosphoshikimate. Glutamine 171 is a binding site for phosphoenolpyruvate. The active-site Proton acceptor is aspartate 319. Phosphoenolpyruvate is bound by residues arginine 350 and arginine 394.

Belongs to the EPSP synthase family. In terms of assembly, monomer.

The protein localises to the cytoplasm. The enzyme catalyses 3-phosphoshikimate + phosphoenolpyruvate = 5-O-(1-carboxyvinyl)-3-phosphoshikimate + phosphate. Its pathway is metabolic intermediate biosynthesis; chorismate biosynthesis; chorismate from D-erythrose 4-phosphate and phosphoenolpyruvate: step 6/7. Catalyzes the transfer of the enolpyruvyl moiety of phosphoenolpyruvate (PEP) to the 5-hydroxyl of shikimate-3-phosphate (S3P) to produce enolpyruvyl shikimate-3-phosphate and inorganic phosphate. The sequence is that of 3-phosphoshikimate 1-carboxyvinyltransferase from Chlorobaculum parvum (strain DSM 263 / NCIMB 8327) (Chlorobium vibrioforme subsp. thiosulfatophilum).